The following is a 160-amino-acid chain: Small ribosomal subunit protein uS7 (160 aa).

This sequence belongs to the universal ribosomal protein uS7 family. Part of the 30S ribosomal subunit. Contacts proteins S9 and S11.

Its function is as follows. One of the primary rRNA binding proteins, it binds directly to 16S rRNA where it nucleates assembly of the head domain of the 30S subunit. Is located at the subunit interface close to the decoding center, probably blocks exit of the E-site tRNA. This is Small ribosomal subunit protein uS7 from Ehrlichia ruminantium (strain Gardel).